We begin with the raw amino-acid sequence, 500 residues long: Beta-glucosidase 28 (500 aa).

A signal peptide spans Met1–Gly24. An a beta-D-glucoside-binding site is contributed by Gln45. An N-linked (GlcNAc...) asparagine glycan is attached at Asn111. Residues His146 and Asn191 to Glu192 each bind a beta-D-glucoside. The Proton donor role is filled by Glu192. The cysteines at positions 211 and 219 are disulfide-linked. Tyr337 is an a beta-D-glucoside binding site. Asn362 carries N-linked (GlcNAc...) asparagine glycosylation. Glu408 lines the a beta-D-glucoside pocket. The Nucleophile role is filled by Glu408. Residues Asn409, Asn415, and Asn416 are each glycosylated (N-linked (GlcNAc...) asparagine). Residues Trp457, Glu464 to Phe465, and Phe473 each bind a beta-D-glucoside.

The protein belongs to the glycosyl hydrolase 1 family.

It catalyses the reaction Hydrolysis of terminal, non-reducing beta-D-glucosyl residues with release of beta-D-glucose.. The polypeptide is Beta-glucosidase 28 (BGLU28) (Oryza sativa subsp. japonica (Rice)).